The following is a 120-amino-acid chain: Immunoglobulin kappa variable 2-24 (120 aa).

The signal sequence occupies residues Met-1 to Ser-19. The Ig-like domain occupies Gly-20–Pro-120. The framework-1 stretch occupies residues Asp-21–Cys-43. A disulfide bond links Cys-43 and Cys-113. A complementarity-determining-1 region spans residues Arg-44–Ser-59. The interval Trp-60–Tyr-74 is framework-2. Residues Lys-75–Ser-81 are complementarity-determining-2. Residues Gly-82 to Cys-113 are framework-3. Residues Met-114–Pro-120 are complementarity-determining-3.

Immunoglobulins are composed of two identical heavy chains and two identical light chains; disulfide-linked.

Its subcellular location is the secreted. It localises to the cell membrane. V region of the variable domain of immunoglobulin light chains that participates in the antigen recognition. Immunoglobulins, also known as antibodies, are membrane-bound or secreted glycoproteins produced by B lymphocytes. In the recognition phase of humoral immunity, the membrane-bound immunoglobulins serve as receptors which, upon binding of a specific antigen, trigger the clonal expansion and differentiation of B lymphocytes into immunoglobulins-secreting plasma cells. Secreted immunoglobulins mediate the effector phase of humoral immunity, which results in the elimination of bound antigens. The antigen binding site is formed by the variable domain of one heavy chain, together with that of its associated light chain. Thus, each immunoglobulin has two antigen binding sites with remarkable affinity for a particular antigen. The variable domains are assembled by a process called V-(D)-J rearrangement and can then be subjected to somatic hypermutations which, after exposure to antigen and selection, allow affinity maturation for a particular antigen. The chain is Immunoglobulin kappa variable 2-24 from Homo sapiens (Human).